A 490-amino-acid chain; its full sequence is GTPase Der (490 aa).

2 EngA-type G domains span residues 3–166 (PVIA…PKDE) and 196–369 (IKIA…KSAV). GTP contacts are provided by residues 9–16 (GRPNVGKS), 56–60 (DTGGI), 118–121 (NKID), 202–209 (GRPNVGKS), 249–253 (DTAGV), and 314–317 (NKWD). The region spanning 370 to 454 (TRWPTSRLTQ…PIRIEFKGGE (85 aa)) is the KH-like domain. Residues 452–490 (GGENPYEGNKNTLTDRQVNKKRRMMSHHKKADKKRRDKR) are disordered. Basic residues predominate over residues 470–490 (NKKRRMMSHHKKADKKRRDKR).

It belongs to the TRAFAC class TrmE-Era-EngA-EngB-Septin-like GTPase superfamily. EngA (Der) GTPase family. As to quaternary structure, associates with the 50S ribosomal subunit.

Functionally, GTPase that plays an essential role in the late steps of ribosome biogenesis. This Pseudomonas savastanoi pv. phaseolicola (strain 1448A / Race 6) (Pseudomonas syringae pv. phaseolicola (strain 1448A / Race 6)) protein is GTPase Der.